The following is a 291-amino-acid chain: Tryptophan 2,3-dioxygenase (291 aa).

Substrate-binding positions include phenylalanine 51 to histidine 55, tyrosine 113, and arginine 117. Histidine 240 is a heme binding site. Residue threonine 254 participates in substrate binding.

It belongs to the tryptophan 2,3-dioxygenase family. In terms of assembly, homotetramer. Heme serves as cofactor.

It carries out the reaction L-tryptophan + O2 = N-formyl-L-kynurenine. Its pathway is amino-acid degradation; L-tryptophan degradation via kynurenine pathway; L-kynurenine from L-tryptophan: step 1/2. Heme-dependent dioxygenase that catalyzes the oxidative cleavage of the L-tryptophan (L-Trp) pyrrole ring and converts L-tryptophan to N-formyl-L-kynurenine. Catalyzes the oxidative cleavage of the indole moiety. This is Tryptophan 2,3-dioxygenase from Myxococcus xanthus (strain DK1622).